The chain runs to 222 residues: Lipid transferase CIDEC (222 aa).

Over residues 1–19 (MAMYTAVSTSVVTQQQLSE) the composition is skewed to polar residues. Disordered stretches follow at residues 1–33 (MAMYTAVSTSVVTQQQLSEPSAEAPRARPCRVT) and 203–222 (EQPPKSKAASLIPTSLKMLQ). A required for liquid-liquid phase separation (LLPS) region spans residues 1–33 (MAMYTAVSTSVVTQQQLSEPSAEAPRARPCRVT). Positions 26 to 103 (RARPCRVTTA…VLHKGQKWQP (78 aa)) constitute a CIDE-N domain.

Belongs to the CIDE family. In terms of assembly, homodimer. Homooligomer; undergoes liquid-liquid phase separation (LLPS) via its N-terminus, facilitating lipid droplet fusion, occurs at the lipid droplet contact sites. Interacts with CIDEA. Interacts with PLIN1. Interacts with NFAT5; this interaction is direct and retains NFAT5 in the cytoplasm. Interacts with CEBPB. Interacts with isoform CLSTN3beta of CLSTN3; inhibiting the lipid transferase activity of CIDEC. Ubiquitinated and targeted to proteasomal degradation, resulting in a short half-life (about 15 minutes in 3T3-L1 cells). Protein stability depends on triaclyglycerol synthesis, fatty acid availability and lipid droplet formation.

The protein resides in the lipid droplet. It is found in the endoplasmic reticulum. The protein localises to the nucleus. It catalyses the reaction a triacyl-sn-glycerol(in) = a triacyl-sn-glycerol(out). In terms of biological role, lipid transferase specifically expressed in white adipose tissue, which promotes unilocular lipid droplet formation by mediating lipid droplet fusion. Lipid droplet fusion promotes their enlargement, restricting lipolysis and favoring lipid storage. Localizes on the lipid droplet surface, at focal contact sites between lipid droplets, and mediates atypical lipid droplet fusion by undergoing liquid-liquid phase separation (LLPS) and promoting directional net neutral lipid transfer from the smaller to larger lipid droplets. The transfer direction may be driven by the internal pressure difference between the contacting lipid droplet pair. Its role in neutral lipid transfer and lipid droplet enlargement is activated by the interaction with PLIN1. May also act as a CEBPB coactivator in the white adipose tissue to control the expression of a subset of CEBPB downstream target genes, including SOCS1, SOCS3, TGFB1, TGFBR1, ID2 and XDH. When overexpressed in preadipocytes, induces apoptosis or increases cell susceptibility to apoptosis induced by serum deprivation or TGFB treatment. The protein is Lipid transferase CIDEC of Bos taurus (Bovine).